The following is an 820-amino-acid chain: Protein bicaudal D homolog 2 (820 aa).

Ser2 is modified (N-acetylserine). Residues 20–270 (EWLRAEVKRL…LSHYMSINDS (251 aa)) adopt a coiled-coil conformation. Residues 25–400 (EVKRLSHELA…RLTENLSALR (376 aa)) are interaction with DYNLL1, DYNC1H1, DYNC1I2, DCTN1 and DCTN2. A phosphoserine mark is found at Ser190, Ser224, and Ser320. Residues 313–332 (SSLDNKTSTPRKDGLAPPSP) form a disordered region. At Thr321 the chain carries Phosphothreonine. Positions 336–595 (SDLLSELHIS…LLATEVGRAD (260 aa)) are interaction with KIF5A. The stretch at 340-539 (SELHISEIQK…VTFSEELANL (200 aa)) forms a coiled coil. 2 positions are modified to phosphoserine: Ser345 and Ser397. Disordered regions lie at residues 400 to 427 (RRLQAGKERQTSLDNEKDRDSHEDGDYY), 563 to 582 (QGKAGRTSPEGRGRRSPVLL), 591 to 618 (VGRADGGTGDNSPSPSSSLPSPLSDPRR), and 799 to 820 (HEQTRRGRSKAASKAKPASPSL). The segment covering 404–424 (AGKERQTSLDNEKDRDSHEDG) has biased composition (basic and acidic residues). A phosphoserine mark is found at Ser570 and Ser578. Positions 586 to 820 (LLATEVGRAD…SKAKPASPSL (235 aa)) are interaction with RANBP2. Phosphothreonine is present on Thr598. A compositionally biased stretch (low complexity) spans 602 to 614 (SPSPSSSLPSPLS). Residues 662 to 804 (DKDKEALMEE…LELDHEQTRR (143 aa)) are a coiled coil. The interaction with RAB6A stretch occupies residues 662–810 (DKDKEALMEE…QTRRGRSKAA (149 aa)). Ser819 bears the Phosphoserine mark.

It belongs to the BicD family. Part of a tripartite complex with dynein and dynactin, acts an adapter linking the dynein motor complex and dynactin. Interacts with CPNE4 (via VWFA domain). Interacts with NEK9. Interacts with DCTN2. Interacts with RAB6A. Interacts with DNAI1. Interacts with DYNLL1, DYNC1H1, DYNC1I2 and DCTN1. Forms a complex with dynein and dynactin. The dynein-dynactin-BICD2 ternary complex (DDB) binds preferentially to tyrosinated microtubules than to detyrosinated microtubules. Interacts with RANBP2, RAB6A and KIF5A. Interacts with KIF1C. In terms of processing, phosphorylated by NEK9 in vitro. In terms of tissue distribution, ubiquitously expressed with high expression in the spinal cord.

It is found in the golgi apparatus. It localises to the cytoplasm. The protein resides in the cytoskeleton. Its subcellular location is the nucleus. The protein localises to the nuclear pore complex. It is found in the nucleus envelope. Functionally, acts as an adapter protein linking the dynein motor complex to various cargos and converts dynein from a non-processive to a highly processive motor in the presence of dynactin. Facilitates and stabilizes the interaction between dynein and dynactin and activates dynein processivity (the ability to move along a microtubule for a long distance without falling off the track). Facilitates the binding of RAB6A to the Golgi by stabilizing its GTP-bound form. Regulates coat complex coatomer protein I (COPI)-independent Golgi-endoplasmic reticulum transport via its interaction with RAB6A and recruitment of the dynein-dynactin motor complex. Contributes to nuclear and centrosomal positioning prior to mitotic entry through regulation of both dynein and kinesin-1. During G2 phase of the cell cycle, associates with RANBP2 at the nuclear pores and recruits dynein and dynactin to the nuclear envelope to ensure proper positioning of the nucleus relative to centrosomes prior to the onset of mitosis. The chain is Protein bicaudal D homolog 2 (Bicd2) from Mus musculus (Mouse).